We begin with the raw amino-acid sequence, 305 residues long: tRNA uridine(34) hydroxylase (305 aa).

The Rhodanese domain maps to 125 to 219 (ADENTVVVDT…YLEEVPREQS (95 aa)). The active-site Cysteine persulfide intermediate is Cys-179.

It belongs to the TrhO family.

The enzyme catalyses uridine(34) in tRNA + AH2 + O2 = 5-hydroxyuridine(34) in tRNA + A + H2O. Functionally, catalyzes oxygen-dependent 5-hydroxyuridine (ho5U) modification at position 34 in tRNAs. This chain is tRNA uridine(34) hydroxylase, found in Brucella suis (strain ATCC 23445 / NCTC 10510).